The primary structure comprises 264 residues: uncharacterized protein (264 aa).

2 disordered regions span residues 1 to 52 and 123 to 207; these read MPRS…AVPG and GGRW…PWTR. Residues 29 to 40 show a composition bias toward low complexity; it reads AAHPTTSPTAAS. Residues 144-154 show a composition bias toward polar residues; that stretch reads HFQSSGAQQES. The span at 188 to 197 shows a compositional bias: basic residues; the sequence is ARKSACKCPR.

This is an uncharacterized protein from Homo sapiens (Human).